We begin with the raw amino-acid sequence, 218 residues long: UPF0502 protein Mmwyl1_3509 (218 aa).

The protein belongs to the UPF0502 family.

This Marinomonas sp. (strain MWYL1) protein is UPF0502 protein Mmwyl1_3509.